The sequence spans 292 residues: Aquaporin-3 (292 aa).

At 1-24 (MGRQKELMNRCGEMLHIRYRLLRQ) the chain is on the cytoplasmic side. A helical transmembrane segment spans residues 25–42 (ALAECLGTLILVMFGCGS). The Extracellular segment spans residues 43 to 56 (VAQVVLSRGTHGGF). A helical membrane pass occupies residues 57–74 (LTINLAFGFAVTLAILVA). At 75-78 (GQVS) the chain is on the cytoplasmic side. An intramembrane region (discontinuously helical) is located at residues 79-92 (GAHLNPAVTFAMCF). The NPA 1 motif lies at 83–85 (NPA). The Cytoplasmic segment spans residues 93-100 (LAREPWIK). The chain crosses the membrane as a helical span at residues 101-121 (LPIYTLAQTLGAFLGAGIVFG). The Extracellular portion of the chain corresponds to 122-159 (LYYDAIWAFAGNELVVSGPNGTAGIFATYPSGHLDMVN). An N-linked (GlcNAc...) asparagine glycan is attached at Asn-141. Residues 160 to 177 (GFFDQFIGTAALIVCVLA) form a helical membrane-spanning segment. The Cytoplasmic segment spans residues 178–189 (IVDPYNNPVPRG). A helical membrane pass occupies residues 190-206 (LEAFTVGLVVLVIGTSM). Residues 207 to 210 (GFNS) lie on the Extracellular side of the membrane. The discontinuously helical intramembrane region spans 211–224 (GYAVNPARDFGPRL). Residues 215 to 217 (NPA) carry the NPA 2 motif. At 225 to 242 (FTALAGWGSEVFTTGQNW) the chain is on the extracellular side. Residues 243 to 264 (WWVPIVSPLLGSIGGVFVYQLM) traverse the membrane as a helical segment. Topologically, residues 265–292 (IGCHLEQPPPSTEAENVKLAHMKHKEQI) are cytoplasmic.

Belongs to the MIP/aquaporin (TC 1.A.8) family. As to quaternary structure, homotetramer; each monomer provides an independent glycerol/water pore. Could also exist in other oligomeric states. As to expression, detected in kidney medulla and papilla, in collecting duct cells. Detected in colon.

It is found in the cell membrane. The protein localises to the basolateral cell membrane. It catalyses the reaction glycerol(in) = glycerol(out). It carries out the reaction H2O(in) = H2O(out). The enzyme catalyses urea(in) = urea(out). The catalysed reaction is H2O2(out) = H2O2(in). With respect to regulation, channel activity is inhibited by mercury ions. In terms of biological role, aquaglyceroporins form homotetrameric transmembrane channels, with each monomer independently mediating glycerol and water transport across the plasma membrane along their osmotic gradient. Could also be permeable to urea. Also participates in cell permeability to H2O2 and H2O2-mediated signaling. In skin, transports glycerol to the epidermis and stratum corneum, where it maintains hydration, elasticity, and supports lipid biosynthesis for barrier repair. In kidney, contributes to the reabsorption of water, helping the body maintain proper fluid balance. In Rattus norvegicus (Rat), this protein is Aquaporin-3.